The following is a 288-amino-acid chain: MWMRVNRMLGNVSVRQFSNVRLVAQEYSMRVQQARNRIVPKSLTFYSANPLHEEKISRLESLLKKYALPSSQKLPGADISAEENLKQNPRPSWISFSDYALIGGGTRLKPRHYEHFIQLLNKLNNIDPQLVNTEIKNELSKYIKKSSIQSQKTQQKELDEFGRSVAIGKRKAATAKVYLVRGEGKILVNGRQLNDYFLKMKDRESIAYPLQVVDSLGKYNVFATCRGGGPTGQAEAIMHAIAKALLVFNPLLKPRLRKAGVITRDYRHVERKKPGKKKARKMPTWVKR.

Residues 269–288 (VERKKPGKKKARKMPTWVKR) form a disordered region.

This sequence belongs to the universal ribosomal protein uS9 family.

It is found in the mitochondrion. The polypeptide is Small ribosomal subunit protein uS9m (MRPS9) (Candida glabrata (strain ATCC 2001 / BCRC 20586 / JCM 3761 / NBRC 0622 / NRRL Y-65 / CBS 138) (Yeast)).